The sequence spans 935 residues: C-1-tetrahydrofolate synthase, cytoplasmic (935 aa).

Position 1 is an N-acetylmethionine (methionine 1). The interval 2-291 is methylenetetrahydrofolate dehydrogenase and methenyltetrahydrofolate cyclohydrolase (D/C) domain; it reads APAEILNGKE…MLMQSTVESA (290 aa). Substrate is bound by residues 52–56 and 99–101; these read YINVK and VQL. Residue lysine 56 is part of the active site. Residues 172-174 and serine 197 each bind NADP(+); that span reads GRS. 272–276 is a binding site for substrate; that stretch reads PGGVG. The tract at residues 310–935 is formyltetrahydrofolate synthetase domain; sequence LNLKTPVPSD…PETEQVNGLF (626 aa). Serine 318 bears the Phosphoserine mark. 380-387 is an ATP binding site; sequence TPLGEGKS. Residues serine 413 and serine 490 each carry the phosphoserine modification.

It in the N-terminal section; belongs to the tetrahydrofolate dehydrogenase/cyclohydrolase family. The protein in the C-terminal section; belongs to the formate--tetrahydrofolate ligase family. Homodimer. As to expression, ubiquitous.

The protein localises to the cytoplasm. It catalyses the reaction (6R)-5,10-methylene-5,6,7,8-tetrahydrofolate + NADP(+) = (6R)-5,10-methenyltetrahydrofolate + NADPH. The enzyme catalyses (6R)-5,10-methenyltetrahydrofolate + H2O = (6R)-10-formyltetrahydrofolate + H(+). The catalysed reaction is (6S)-5,6,7,8-tetrahydrofolate + formate + ATP = (6R)-10-formyltetrahydrofolate + ADP + phosphate. It functions in the pathway one-carbon metabolism; tetrahydrofolate interconversion. Trifunctional enzyme that catalyzes the interconversion of three forms of one-carbon-substituted tetrahydrofolate: (6R)-5,10-methylene-5,6,7,8-tetrahydrofolate, 5,10-methenyltetrahydrofolate and (6S)-10-formyltetrahydrofolate. These derivatives of tetrahydrofolate are differentially required in nucleotide and amino acid biosynthesis, (6S)-10-formyltetrahydrofolate being required for purine biosynthesis while (6R)-5,10-methylene-5,6,7,8-tetrahydrofolate is used for serine and methionine biosynthesis for instance. This chain is C-1-tetrahydrofolate synthase, cytoplasmic (MTHFD1), found in Homo sapiens (Human).